The chain runs to 149 residues: MPSRFTKTRKHRGHVSAGKGRIGKHRKHPGGRGMAGGQHHHRINMDKYHPGYFGKVGMRYFHKQQAHFWKPVLNLDKLWTLIPEDKRDQYLKSASKETAPVIDTLAAGYGKILGKGRIPNVPVIVKARFVSKLAEEKIRAAGGVVELIA.

Composition is skewed to basic residues over residues 1–14 (MPSRFTKTRKHRGH) and 21–30 (RIGKHRKHPG). Residues 1 to 39 (MPSRFTKTRKHRGHVSAGKGRIGKHRKHPGGRGMAGGQH) form a disordered region. 2 consecutive short sequence motifs (nuclear localization signal) follow at residues 7–13 (KTRKHRG) and 24–30 (KHRKHPG). A Glycyl lysine isopeptide (Lys-Gly) (interchain with G-Cter in ubiquitin) cross-link involves residue lysine 96.

It belongs to the universal ribosomal protein uL15 family. Component of the large ribosomal subunit (LSU). Mature yeast ribosomes consist of a small (40S) and a large (60S) subunit. The 40S small subunit contains 1 molecule of ribosomal RNA (18S rRNA) and 33 different proteins (encoded by 57 genes). The large 60S subunit contains 3 rRNA molecules (25S, 5.8S and 5S rRNA) and 46 different proteins (encoded by 81 genes).

Its subcellular location is the cytoplasm. Its function is as follows. Component of the ribosome, a large ribonucleoprotein complex responsible for the synthesis of proteins in the cell. The small ribosomal subunit (SSU) binds messenger RNAs (mRNAs) and translates the encoded message by selecting cognate aminoacyl-transfer RNA (tRNA) molecules. The large subunit (LSU) contains the ribosomal catalytic site termed the peptidyl transferase center (PTC), which catalyzes the formation of peptide bonds, thereby polymerizing the amino acids delivered by tRNAs into a polypeptide chain. The nascent polypeptides leave the ribosome through a tunnel in the LSU and interact with protein factors that function in enzymatic processing, targeting, and the membrane insertion of nascent chains at the exit of the ribosomal tunnel. This Saccharomyces cerevisiae (strain ATCC 204508 / S288c) (Baker's yeast) protein is Large ribosomal subunit protein uL15.